Reading from the N-terminus, the 282-residue chain is Protease HtpX homolog (282 aa).

2 helical membrane-spanning segments follow: residues 7-26 (TTVL…GAVG) and 30-49 (GMMI…YWFS). His131 serves as a coordination point for Zn(2+). Glu132 is an active-site residue. His135 provides a ligand contact to Zn(2+). Transmembrane regions (helical) follow at residues 141 to 161 (ILVS…ARMA) and 183 to 203 (LGLV…QLAI). Zn(2+) is bound at residue Glu208.

This sequence belongs to the peptidase M48B family. The cofactor is Zn(2+).

It is found in the cell inner membrane. The sequence is that of Protease HtpX homolog from Syntrophobacter fumaroxidans (strain DSM 10017 / MPOB).